The chain runs to 367 residues: NAD(P)H-quinone oxidoreductase subunit 1, chloroplastic (367 aa).

8 helical membrane passes run 29–49 (WIPL…LVVV), 96–116 (VLLF…SYLI), 128–148 (INLG…GLLM), 176–196 (LALC…IDIV), 204–224 (ILGW…IAAL), 266–286 (LVSA…PIPI), 304–324 (VISA…FLFL), and 347–367 (FLLP…IALL).

Belongs to the complex I subunit 1 family. NDH is composed of at least 16 different subunits, 5 of which are encoded in the nucleus.

It localises to the plastid. The protein localises to the chloroplast thylakoid membrane. The enzyme catalyses a plastoquinone + NADH + (n+1) H(+)(in) = a plastoquinol + NAD(+) + n H(+)(out). It carries out the reaction a plastoquinone + NADPH + (n+1) H(+)(in) = a plastoquinol + NADP(+) + n H(+)(out). Its function is as follows. NDH shuttles electrons from NAD(P)H:plastoquinone, via FMN and iron-sulfur (Fe-S) centers, to quinones in the photosynthetic chain and possibly in a chloroplast respiratory chain. The immediate electron acceptor for the enzyme in this species is believed to be plastoquinone. Couples the redox reaction to proton translocation, and thus conserves the redox energy in a proton gradient. The polypeptide is NAD(P)H-quinone oxidoreductase subunit 1, chloroplastic (Mesostigma viride (Green alga)).